The following is a 245-amino-acid chain: Carbohydrate deacetylase (245 aa).

H59 and H125 together coordinate Mg(2+).

Belongs to the YdjC deacetylase family. In terms of assembly, homodimer. The cofactor is Mg(2+).

In terms of biological role, probably catalyzes the deacetylation of acetylated carbohydrates an important step in the degradation of oligosaccharides. This Listeria monocytogenes serotype 4a (strain HCC23) protein is Carbohydrate deacetylase.